The following is a 698-amino-acid chain: MAPPGVGVGVAYLWGKGRGGRKGTPVVVTMESPNYSVVEVDGPDAEAELRTAAVAMDKGGGRGRSRSRTARQLTWVLLLRARRAAGRLASFAAAAARRFRRSPADAADELGRGRGRLMYGFIRGFLALSLLALAVELAAYWNGWRLRRPELHVPEAVEIEGWAHSAYISWMSFRADYIRRPIEFLSKACILLFVIQSMDRLVLCLGCFWIKLRKIKPRIEGDPFREGSGYQHPMVLVQIPMCNEKEVYEQSISAACQLDWPREKFLIQVLDDSSDESIQLLIKAEVSKWSHQGVNIVYRHRVLRTGYKAGNLKSAMSCDYVKDYEFVAIFDADFQPTPDFLKKTIPHFEGNPELGLVQARWSFVNKDENLLTRLQNINLCFHFEVEQQVNGVFLNFFGFNGTAGVWRIQALEESGGWLERTTVEDMDIAVRAHLNGWKFIFLNDVKVLCELPESYEAYRKQQHRWHSGPMHLFWLCLPDILTAKISSWKKANLILLFFLLRKLILPFYSFTLFCVILPLTMFVPEAELPVWVICYVPVCMSFLNILPSPRSFPFIVPYLLFENTMSVTKFNAMVSGLFKLGSSYEWIVTKKSGRSSESDLSTAVERDTKDLTLPRLQKQISESELIDLKMQKERQEKAPLGAKKANKIYKKELALSLLLLTAATRSLLSAQGIHFYFLLFQGVSFLFVGLDLIGEQID.

A run of 2 helical transmembrane segments spans residues 124-144 (GFLALSLLALAVELAAYWNGW) and 190-210 (ILLFVIQSMDRLVLCLGCFWI). Aspartate 272 is an active-site residue. Residues aspartate 331 and aspartate 333 each contribute to the substrate site. The active site involves aspartate 425. A run of 4 helical transmembrane segments spans residues 503–523 (LILPFYSFTLFCVILPLTMFV), 528–548 (LPVWVICYVPVCMSFLNILPS), 653–668 (LALSLLLLTAATRSLL), and 673–693 (IHFYFLLFQGVSFLFVGLDLI).

This sequence belongs to the glycosyltransferase 2 family. Plant cellulose synthase-like C subfamily.

It is found in the golgi apparatus membrane. Its function is as follows. Probable beta-1,4-glucan synthase rather involved in the synthesis of the xyloglucan backbone than cellulose. Seems to work simultaneously with xyloglucan 6-xylosyltransferase. Xyloglucan is a noncellulosic polysaccharides of plant cell wall and consists of a glucan backbone substituted by xylose, galactose and fucose. The chain is Probable xyloglucan glycosyltransferase 2 (CSLC2) from Oryza sativa subsp. indica (Rice).